The chain runs to 157 residues: Probable succinate transporter subunit YjjB (157 aa).

Transmembrane regions (helical) follow at residues 15–35, 50–70, 87–107, and 121–141; these read ILAA…VQAL, MILM…SMLV, VFTV…TAMI, and LMIT…ALSV.

This sequence belongs to the ThrE exporter (TC 2.A.79) family. The transporter is composed of YjjB and YjjP.

The protein resides in the cell inner membrane. In terms of biological role, involved in succinate export with YjjP. Both proteins are required for export. This is Probable succinate transporter subunit YjjB from Shigella dysenteriae serotype 1 (strain Sd197).